The sequence spans 188 residues: NADH-quinone oxidoreductase subunit B 1 (188 aa).

Residues C39, C40, C105, and C134 each coordinate [4Fe-4S] cluster.

This sequence belongs to the complex I 20 kDa subunit family. NDH-1 is composed of 14 different subunits. Subunits NuoB, C, D, E, F, and G constitute the peripheral sector of the complex. It depends on [4Fe-4S] cluster as a cofactor.

Its subcellular location is the cell inner membrane. It carries out the reaction a quinone + NADH + 5 H(+)(in) = a quinol + NAD(+) + 4 H(+)(out). Functionally, NDH-1 shuttles electrons from NADH, via FMN and iron-sulfur (Fe-S) centers, to quinones in the respiratory chain. The immediate electron acceptor for the enzyme in this species is believed to be ubiquinone. Couples the redox reaction to proton translocation (for every two electrons transferred, four hydrogen ions are translocated across the cytoplasmic membrane), and thus conserves the redox energy in a proton gradient. In Solibacter usitatus (strain Ellin6076), this protein is NADH-quinone oxidoreductase subunit B 1.